A 343-amino-acid chain; its full sequence is tRNA N6-adenosine threonylcarbamoyltransferase (343 aa).

Histidine 116 and histidine 120 together coordinate Fe cation. Substrate contacts are provided by residues threonine 139–glycine 143, aspartate 172, glycine 185, aspartate 189, and asparagine 280. Aspartate 308 is a binding site for Fe cation.

The protein belongs to the KAE1 / TsaD family. It depends on Fe(2+) as a cofactor.

Its subcellular location is the cytoplasm. The enzyme catalyses L-threonylcarbamoyladenylate + adenosine(37) in tRNA = N(6)-L-threonylcarbamoyladenosine(37) in tRNA + AMP + H(+). Functionally, required for the formation of a threonylcarbamoyl group on adenosine at position 37 (t(6)A37) in tRNAs that read codons beginning with adenine. Is involved in the transfer of the threonylcarbamoyl moiety of threonylcarbamoyl-AMP (TC-AMP) to the N6 group of A37, together with TsaE and TsaB. TsaD likely plays a direct catalytic role in this reaction. In Cytophaga hutchinsonii (strain ATCC 33406 / DSM 1761 / CIP 103989 / NBRC 15051 / NCIMB 9469 / D465), this protein is tRNA N6-adenosine threonylcarbamoyltransferase.